A 160-amino-acid chain; its full sequence is Large ribosomal subunit protein eL21A (160 aa).

A Glycyl lysine isopeptide (Lys-Gly) (interchain with G-Cter in ubiquitin) cross-link involves residue lysine 32.

Belongs to the eukaryotic ribosomal protein eL21 family. In terms of assembly, component of the large ribosomal subunit (LSU). Mature yeast ribosomes consist of a small (40S) and a large (60S) subunit. The 40S small subunit contains 1 molecule of ribosomal RNA (18S rRNA) and 33 different proteins (encoded by 57 genes). The large 60S subunit contains 3 rRNA molecules (25S, 5.8S and 5S rRNA) and 46 different proteins (encoded by 81 genes).

It localises to the cytoplasm. Component of the ribosome, a large ribonucleoprotein complex responsible for the synthesis of proteins in the cell. The small ribosomal subunit (SSU) binds messenger RNAs (mRNAs) and translates the encoded message by selecting cognate aminoacyl-transfer RNA (tRNA) molecules. The large subunit (LSU) contains the ribosomal catalytic site termed the peptidyl transferase center (PTC), which catalyzes the formation of peptide bonds, thereby polymerizing the amino acids delivered by tRNAs into a polypeptide chain. The nascent polypeptides leave the ribosome through a tunnel in the LSU and interact with protein factors that function in enzymatic processing, targeting, and the membrane insertion of nascent chains at the exit of the ribosomal tunnel. The protein is Large ribosomal subunit protein eL21A of Saccharomyces cerevisiae (strain ATCC 204508 / S288c) (Baker's yeast).